The primary structure comprises 143 residues: Interleukin-3 (143 aa).

The first 19 residues, 1–19, serve as a signal peptide directing secretion; the sequence is MSRLPVLLLLHLLVSPGLQ. C35 and C103 form a disulfide bridge. N89 carries an N-linked (GlcNAc...) asparagine glycan.

Belongs to the IL-3 family. In terms of assembly, monomer. In terms of tissue distribution, activated T-cells, mast cells, natural killer cells.

The protein resides in the secreted. Granulocyte/macrophage colony-stimulating factors are cytokines that act in hematopoiesis by controlling the production, differentiation, and function of 2 related white cell populations of the blood, the granulocytes and the monocytes-macrophages. Its function is as follows. This CSF induces granulocytes, macrophages, mast cells, stem cells, erythroid cells, eosinophils and megakaryocytes. The protein is Interleukin-3 (IL3) of Macaca mulatta (Rhesus macaque).